Consider the following 749-residue polypeptide: Catalase-peroxidase 2 (749 aa).

Positions 1-27 (MFKRTIPLFAAFTLAISPSVFPNYAYA) are cleaved as a signal peptide. Positions 107–229 (WHAAGTYRIY…LAATVMGLIY (123 aa)) form a cross-link, tryptophyl-tyrosyl-methioninium (Trp-Tyr) (with M-255). Histidine 108 acts as the Proton acceptor in catalysis. The tryptophyl-tyrosyl-methioninium (Tyr-Met) (with W-107) cross-link spans 229–255 (YVNPEGPNGVPDPLAAAEKIRETFGRM). Position 270 (histidine 270) interacts with heme b.

The protein belongs to the peroxidase family. Peroxidase/catalase subfamily. In terms of assembly, homodimer or homotetramer. Requires heme b as cofactor. In terms of processing, formation of the three residue Trp-Tyr-Met cross-link is important for the catalase, but not the peroxidase activity of the enzyme.

It carries out the reaction H2O2 + AH2 = A + 2 H2O. The enzyme catalyses 2 H2O2 = O2 + 2 H2O. In terms of biological role, bifunctional enzyme with both catalase and broad-spectrum peroxidase activity. This is Catalase-peroxidase 2 from Legionella pneumophila (strain Paris).